Here is a 468-residue protein sequence, read N- to C-terminus: 3-isopropylmalate dehydratase large subunit (468 aa).

Residues Cys-347, Cys-407, and Cys-410 each coordinate [4Fe-4S] cluster.

Belongs to the aconitase/IPM isomerase family. LeuC type 1 subfamily. As to quaternary structure, heterodimer of LeuC and LeuD. [4Fe-4S] cluster is required as a cofactor.

The catalysed reaction is (2R,3S)-3-isopropylmalate = (2S)-2-isopropylmalate. The protein operates within amino-acid biosynthesis; L-leucine biosynthesis; L-leucine from 3-methyl-2-oxobutanoate: step 2/4. Functionally, catalyzes the isomerization between 2-isopropylmalate and 3-isopropylmalate, via the formation of 2-isopropylmaleate. The protein is 3-isopropylmalate dehydratase large subunit of Campylobacter jejuni subsp. jejuni serotype O:23/36 (strain 81-176).